A 200-amino-acid chain; its full sequence is ATP-dependent Clp protease proteolytic subunit 2 (200 aa).

Catalysis depends on serine 99, which acts as the Nucleophile. The active site involves histidine 123.

The protein belongs to the peptidase S14 family. In terms of assembly, fourteen ClpP subunits assemble into 2 heptameric rings which stack back to back to give a disk-like structure with a central cavity, resembling the structure of eukaryotic proteasomes.

Its subcellular location is the cytoplasm. The enzyme catalyses Hydrolysis of proteins to small peptides in the presence of ATP and magnesium. alpha-casein is the usual test substrate. In the absence of ATP, only oligopeptides shorter than five residues are hydrolyzed (such as succinyl-Leu-Tyr-|-NHMec, and Leu-Tyr-Leu-|-Tyr-Trp, in which cleavage of the -Tyr-|-Leu- and -Tyr-|-Trp bonds also occurs).. Its function is as follows. Cleaves peptides in various proteins in a process that requires ATP hydrolysis. Has a chymotrypsin-like activity. Plays a major role in the degradation of misfolded proteins. This chain is ATP-dependent Clp protease proteolytic subunit 2, found in Symbiobacterium thermophilum (strain DSM 24528 / JCM 14929 / IAM 14863 / T).